The sequence spans 302 residues: Stanniocalcin-2 (302 aa).

The first 24 residues, 1 to 24 (MCAERLGQFMTLALVLATFDPARG), serve as a signal peptide directing secretion. Positions 23 to 44 (RGTDATNPPEGPQDRSPQQKGR) are disordered. Residues N73 and N74 are each glycosylated (N-linked (GlcNAc...) asparagine). The interval 217–302 (RPPTAPPERQ…EQSEYSDIRR (86 aa)) is disordered. Residues 227–264 (PQVDRTKLSRAHHGEAGHHLPEPSSRETGRGAKGERGS) are compositionally biased toward basic and acidic residues. Residues S250 and S251 each carry the phosphoserine modification. T254 carries the phosphothreonine modification.

The protein belongs to the stanniocalcin family. Homodimer; disulfide-linked.

It localises to the secreted. Has an anti-hypocalcemic action on calcium and phosphate homeostasis. The chain is Stanniocalcin-2 (STC2) from Pongo abelii (Sumatran orangutan).